A 465-amino-acid chain; its full sequence is Light-independent protochlorophyllide reductase subunit N (465 aa).

3 residues coordinate [4Fe-4S] cluster: C22, C47, and C107.

Belongs to the BchN/ChlN family. In terms of assembly, protochlorophyllide reductase is composed of three subunits; ChlL, ChlN and ChlB. Forms a heterotetramer of two ChlB and two ChlN subunits. It depends on [4Fe-4S] cluster as a cofactor.

It localises to the plastid. Its subcellular location is the chloroplast. The enzyme catalyses chlorophyllide a + oxidized 2[4Fe-4S]-[ferredoxin] + 2 ADP + 2 phosphate = protochlorophyllide a + reduced 2[4Fe-4S]-[ferredoxin] + 2 ATP + 2 H2O. Its pathway is porphyrin-containing compound metabolism; chlorophyll biosynthesis (light-independent). In terms of biological role, component of the dark-operative protochlorophyllide reductase (DPOR) that uses Mg-ATP and reduced ferredoxin to reduce ring D of protochlorophyllide (Pchlide) to form chlorophyllide a (Chlide). This reaction is light-independent. The NB-protein (ChlN-ChlB) is the catalytic component of the complex. The chain is Light-independent protochlorophyllide reductase subunit N from Marchantia polymorpha (Common liverwort).